The following is a 96-amino-acid chain: Co-chaperonin GroES (96 aa).

The protein belongs to the GroES chaperonin family. As to quaternary structure, heptamer of 7 subunits arranged in a ring. Interacts with the chaperonin GroEL.

Its subcellular location is the cytoplasm. Its function is as follows. Together with the chaperonin GroEL, plays an essential role in assisting protein folding. The GroEL-GroES system forms a nano-cage that allows encapsulation of the non-native substrate proteins and provides a physical environment optimized to promote and accelerate protein folding. GroES binds to the apical surface of the GroEL ring, thereby capping the opening of the GroEL channel. In Aliivibrio fischeri (strain ATCC 700601 / ES114) (Vibrio fischeri), this protein is Co-chaperonin GroES.